The following is a 460-amino-acid chain: MKEYRTITQVAGPLVFVEKTEPVGYQELVNLVLADGSEKRGQVLDTSDDIVVVQVFETTTGIGKDTGVRFTGETIKMPVGKDMLGRILSGAGKPKDGGPDIVPEKRLEITGAAINPWARGSPRQFIQTGISTIDLTNTLVRGQKLPIFSGSGLPHNEIALQIARQAKVPGSDEQFAVVFAAMGITKEEENQFMAEFERTGALEHAVVFLNLADDPAVERIITPRLALTTAEYLAFELDYHVLVILTDMTNYCEALRQIGAAREEVPGRRGYPGYMYTDLASLYERAGIIKGKKGSVTQLSILTMPGDDITHPIPDLSGYITEGQIVVNRDLHRKGIYPPINVLPSLSRLMNLGIGKGFTREDHKKVSDQLYAGYAEGVDLRGLVAIVGKDALSERDRGFLEFAEMFENRFVRQGKDEDRTIDESLDLGWDLLKDIPEEQLVRIDRELIQKYHPKYRKKAE.

This sequence belongs to the ATPase alpha/beta chains family. In terms of assembly, has multiple subunits with at least A(3), B(3), C, D, E, F, H, I and proteolipid K(x).

It is found in the cell membrane. In terms of biological role, component of the A-type ATP synthase that produces ATP from ADP in the presence of a proton gradient across the membrane. The B chain is a regulatory subunit. This is A-type ATP synthase subunit B 1 from Methanospirillum hungatei JF-1 (strain ATCC 27890 / DSM 864 / NBRC 100397 / JF-1).